Consider the following 138-residue polypeptide: DNA-directed RNA polymerase subunit omega (138 aa).

It belongs to the RNA polymerase subunit omega family. In terms of assembly, the RNAP catalytic core consists of 2 alpha, 1 beta, 1 beta' and 1 omega subunit. When a sigma factor is associated with the core the holoenzyme is formed, which can initiate transcription.

It catalyses the reaction RNA(n) + a ribonucleoside 5'-triphosphate = RNA(n+1) + diphosphate. In terms of biological role, promotes RNA polymerase assembly. Latches the N- and C-terminal regions of the beta' subunit thereby facilitating its interaction with the beta and alpha subunits. The protein is DNA-directed RNA polymerase subunit omega of Thermodesulfovibrio yellowstonii (strain ATCC 51303 / DSM 11347 / YP87).